We begin with the raw amino-acid sequence, 545 residues long: Germacrene D synthase 1 (545 aa).

Positions 298, 302, 443, and 451 each coordinate Mg(2+). Positions 298–302 match the DDXXD motif motif; it reads DDTFD.

Belongs to the terpene synthase family. Requires Mg(2+) as cofactor.

The protein resides in the cytoplasm. Its subcellular location is the cytosol. It catalyses the reaction (2E,6E)-farnesyl diphosphate = (-)-germacrene D + diphosphate. The protein operates within secondary metabolite biosynthesis; terpenoid biosynthesis. In terms of biological role, sesquiterpene synthase involved in germacrene D biosynthesis. Also produces at least 13 additional sesquiterpene products, including germacrene C and (+)-germacrene A, beta-ylangene, (E)-beta-farnesene and (E,E)-alpha-farnesene. The protein is Germacrene D synthase 1 of Pogostemon cablin (Patchouli).